The following is an 82-amino-acid chain: Delta-actitoxin-Aeq2c (82 aa).

Positions 1–19 (MNRLMILVFAAVFLALASA) are cleaved as a signal peptide. A propeptide spanning residues 20–26 (DEDVDIA) is cleaved from the precursor. 3 disulfide bridges follow: cysteine 32/cysteine 79, cysteine 34/cysteine 69, and cysteine 62/cysteine 80.

It belongs to the sea anemone sodium channel inhibitory toxin family. Type I subfamily.

It is found in the secreted. Its subcellular location is the nematocyst. Functionally, binds specifically to voltage-gated sodium channels (Nav), thereby delaying their inactivation during signal transduction. Causes death to crabs. This chain is Delta-actitoxin-Aeq2c, found in Actinia equina (Beadlet anemone).